The primary structure comprises 64 residues: Delta-buthitoxin-Hj2a (64 aa).

Cystine bridges form between Cys-12–Cys-63, Cys-16–Cys-36, Cys-22–Cys-46, and Cys-26–Cys-48. Arg-64 is modified (arginine amide).

Belongs to the long (4 C-C) scorpion toxin superfamily. Sodium channel inhibitor family. Alpha subfamily. In terms of tissue distribution, expressed by the venom gland.

Its subcellular location is the secreted. This non-amidated recombinant toxin slows fast inactivation on Nav1.1/SCN1A (EC(50)=52.8 nM), Nav1.4/SN4A (EC(50)=32 nM), Nav1.5/SCN5A (EC(50)=116.7 nM), Nav1.6/SCN8A (EC(50)=46.3 nM), and Nav1.7/SCN9A (EC(50)=147.4 nM) voltage-gated sodium channels. On Nav1.1/SCN1A channel, acts as an agonist by inducing a shift in both the voltage dependence of channel inactivation (alpha-toxin activity) and activation (beta-toxin activity). The polypeptide is Delta-buthitoxin-Hj2a (Hottentotta judaicus (Black scorpion)).